Consider the following 633-residue polypeptide: Polypeptide N-acetylgalactosaminyltransferase 3 (633 aa).

Over 1-19 (MAHLKRLVKLHIKRHYHKK) the chain is Cytoplasmic. Residues 20–37 (FWKLGAVIFFFIIVLVLM) traverse the membrane as a helical; Signal-anchor for type II membrane protein segment. Over 38 to 633 (QREVSVQYSK…LQKWILSQND (596 aa)) the chain is Lumenal. N132 is a glycosylation site (N-linked (GlcNAc...) asparagine). The segment at 184–293 (LPTTSVIIVF…YGWLEPLLAR (110 aa)) is catalytic subdomain A. Positions 277 and 279 each coordinate Mn(2+). N297 carries an N-linked (GlcNAc...) asparagine glycan. The catalytic subdomain B stretch occupies residues 356–418 (PIKTPTFAGG…PCSVVGHVFR (63 aa)). Mn(2+) is bound at residue H415. N484 carries N-linked (GlcNAc...) asparagine glycosylation. Residues 504 to 630 (VISGYIKSVG…SDPLQKWILS (127 aa)) enclose the Ricin B-type lectin domain. C517 and C535 form a disulfide bridge. 4 residues coordinate UDP-N-acetyl-alpha-D-galactosamine: D519, E522, H536, and N541. 2 disulfide bridges follow: C561-C574 and C605-C618.

Belongs to the glycosyltransferase 2 family. GalNAc-T subfamily. Mn(2+) serves as cofactor. As to expression, expressed in organs that contain secretory epithelial glands. Highly expressed in pancreas, skin, kidney and testis. Weakly expressed in prostate, ovary, intestine and colon. Also expressed in placenta and lung and fetal lung and fetal kidney.

Its subcellular location is the golgi apparatus. It is found in the golgi stack membrane. It carries out the reaction L-seryl-[protein] + UDP-N-acetyl-alpha-D-galactosamine = a 3-O-[N-acetyl-alpha-D-galactosaminyl]-L-seryl-[protein] + UDP + H(+). The enzyme catalyses L-threonyl-[protein] + UDP-N-acetyl-alpha-D-galactosamine = a 3-O-[N-acetyl-alpha-D-galactosaminyl]-L-threonyl-[protein] + UDP + H(+). The protein operates within protein modification; protein glycosylation. Its function is as follows. Catalyzes the initial reaction in O-linked oligosaccharide biosynthesis, the transfer of an N-acetyl-D-galactosamine residue to a serine or threonine residue on the protein receptor. Has activity toward HIV envelope glycoprotein gp120, EA2, MUC2, MUC1A and MUC5AC. Probably glycosylates fibronectin in vivo. Glycosylates FGF23. This Homo sapiens (Human) protein is Polypeptide N-acetylgalactosaminyltransferase 3 (GALNT3).